Here is a 352-residue protein sequence, read N- to C-terminus: 3-dehydroquinate synthase (352 aa).

NAD(+)-binding positions include 60–65 (DGEGAK), 118–119 (TT), lysine 131, lysine 140, and 158–161 (FLET). Residues glutamate 173, histidine 237, and histidine 253 each coordinate Zn(2+).

This sequence belongs to the sugar phosphate cyclases superfamily. Dehydroquinate synthase family. Requires NAD(+) as cofactor. Co(2+) is required as a cofactor. The cofactor is Zn(2+).

The protein localises to the cytoplasm. The enzyme catalyses 7-phospho-2-dehydro-3-deoxy-D-arabino-heptonate = 3-dehydroquinate + phosphate. It functions in the pathway metabolic intermediate biosynthesis; chorismate biosynthesis; chorismate from D-erythrose 4-phosphate and phosphoenolpyruvate: step 2/7. In terms of biological role, catalyzes the conversion of 3-deoxy-D-arabino-heptulosonate 7-phosphate (DAHP) to dehydroquinate (DHQ). The sequence is that of 3-dehydroquinate synthase from Sulfurisphaera tokodaii (strain DSM 16993 / JCM 10545 / NBRC 100140 / 7) (Sulfolobus tokodaii).